The following is an 899-amino-acid chain: Protein argonaute (899 aa).

A disordered region spans residues T107–T129. Positions R116 to G125 are enriched in gly residues. The region spanning S229–L313 is the PAZ domain. Positions L555 to G878 constitute a Piwi domain.

This sequence belongs to the argonaute family. Ago subfamily. Interacts with miR2. Highly specific binding to the mRNA m7G-cap. May be a component of the RNA-induced silencing complex (RISC), a sequence-specific, multicomponent nuclease that destroys or silences messenger RNAs homologous to the silencing trigger.

The protein resides in the cytoplasm. In terms of biological role, plays an essential role in growth and, with Dicer, also involved in microRNA (miRNA)-mediated translational repression. The RNA interference pathway is implicated in antigenic variation having a role in regulation of variant-specific surface protein (VSP)-coding gene expression. Several VSP genes are transcribed but only transcripts encoding the VSP to be expressed accumulate. Antisense RNAs corresponding to the silenced VSP genes are detected. In Giardia intestinalis (strain ATCC 50581 / GS clone H7) (Giardia lamblia), this protein is Protein argonaute.